Consider the following 340-residue polypeptide: N-acetyl-gamma-glutamyl-phosphate reductase (340 aa).

The active site involves C146.

It belongs to the NAGSA dehydrogenase family. Type 1 subfamily.

Its subcellular location is the cytoplasm. The enzyme catalyses N-acetyl-L-glutamate 5-semialdehyde + phosphate + NADP(+) = N-acetyl-L-glutamyl 5-phosphate + NADPH + H(+). It functions in the pathway amino-acid biosynthesis; L-arginine biosynthesis; N(2)-acetyl-L-ornithine from L-glutamate: step 3/4. In terms of biological role, catalyzes the NADPH-dependent reduction of N-acetyl-5-glutamyl phosphate to yield N-acetyl-L-glutamate 5-semialdehyde. This is N-acetyl-gamma-glutamyl-phosphate reductase from Streptococcus gordonii (strain Challis / ATCC 35105 / BCRC 15272 / CH1 / DL1 / V288).